The chain runs to 236 residues: Protein INCA1 (236 aa).

Position 23 is a phosphoserine (Ser23). Residues 75–99 (GLYPPEQLPPPEMLWRRKKRRPCLE) form an interaction with CCNA1 and CCNA1/CDK2 complex; essential for CDK2 inhibitory activity region. The Nuclear localization signal motif lies at 90–95 (RRKKRR). Residue Thr182 is modified to Phosphothreonine. Phosphoserine is present on residues Ser191 and Ser194.

Belongs to the INCA family. As to quaternary structure, interacts with CCNA1. Interacts with CCNA2, CCNB1 and CCNE1. Found in a complex with CCNA1 and CDK2. Interacts with ZNF16; the interaction inhibits INCA1 activity and induces the cell cycle process. Interacts with SPACA9. Interacts with the CCNA1/CDK2 complex. Interacts with ING5, DAZAP2, RNF26, USP15, SPOUT1, DPH7, TRIM26 and RAB5C. Post-translationally, phosphorylated when part of a complex with CCNA1 and CDK2. Strongly phosphorylated by CDK2 on its C-terminal region spanning amino acid 149-221. Less intensively phosphorylated by CDK2 on its first 75 amino acid residues. As to expression, detected in testis, and at lower levels in ovary. Detected at very low levels in testis tumors. Down-regulated in bone marrow cells in acute myeloid and lymphoid leukemia patients as compared with normal bone marrow cells.

Its subcellular location is the nucleus. It is found in the cytoplasm. Functionally, binds to CDK2-bound cyclins and inhibits the kinase activity of CDK2; binding to cyclins is critical for its function as CDK inhibitor. Inhibits cell growth and cell proliferation and may play a role in cell cycle control. Required for ING5-mediated regulation of S-phase progression, enhancement of Fas-induced apoptosis and inhibition of cell growth. The protein is Protein INCA1 (INCA1) of Homo sapiens (Human).